A 66-amino-acid chain; its full sequence is UPF0370 protein CKO_00315 (66 aa).

The chain crosses the membrane as a helical span at residues 4–24 (LAKYWWILVLVFLVGVLINVI). The interval 39–66 (KPELPPHRDFNDKWDDDDDWPKKDQPKK) is disordered. The span at 42-51 (LPPHRDFNDK) shows a compositional bias: basic and acidic residues.

This sequence belongs to the UPF0370 family.

It is found in the cell membrane. The protein is UPF0370 protein CKO_00315 of Citrobacter koseri (strain ATCC BAA-895 / CDC 4225-83 / SGSC4696).